Here is a 395-residue protein sequence, read N- to C-terminus: Small RNA 2'-O-methyltransferase (395 aa).

S-adenosyl-L-methionine-binding residues include Asp79 and Ser115. Residues Glu133, Glu136, His137, and His182 each contribute to the Mg(2+) site.

This sequence belongs to the methyltransferase superfamily. HEN1 family. Requires Mg(2+) as cofactor. As to expression, specifically expressed in testis.

It localises to the cytoplasm. The catalysed reaction is small RNA 3'-end nucleotide + S-adenosyl-L-methionine = small RNA 3'-end 2'-O-methylnucleotide + S-adenosyl-L-homocysteine + H(+). Methyltransferase that adds a 2'-O-methyl group at the 3'-end of piRNAs, a class of 24 to 30 nucleotide RNAs that are generated by a Dicer-independent mechanism and are primarily derived from transposons and other repeated sequence elements. This probably protects the 3'-end of piRNAs from uridylation activity and subsequent degradation. Stabilization of piRNAs is essential for gametogenesis. The chain is Small RNA 2'-O-methyltransferase (Henmt1) from Mus musculus (Mouse).